We begin with the raw amino-acid sequence, 1613 residues long: NAD-specific glutamate dehydrogenase (1613 aa).

Residue K849 is part of the active site.

This sequence belongs to the Glu/Leu/Phe/Val dehydrogenases family.

It catalyses the reaction L-glutamate + NAD(+) + H2O = 2-oxoglutarate + NH4(+) + NADH + H(+). In terms of biological role, involved in arginine catabolism by converting L-glutamate, into 2-oxoglutarate, which is then channeled into the tricarboxylic acid cycle. The sequence is that of NAD-specific glutamate dehydrogenase from Halomonas elongata (strain ATCC 33173 / DSM 2581 / NBRC 15536 / NCIMB 2198 / 1H9).